We begin with the raw amino-acid sequence, 290 residues long: ATP synthase gamma chain (290 aa).

The protein belongs to the ATPase gamma chain family. As to quaternary structure, F-type ATPases have 2 components, CF(1) - the catalytic core - and CF(0) - the membrane proton channel. CF(1) has five subunits: alpha(3), beta(3), gamma(1), delta(1), epsilon(1). CF(0) has three main subunits: a, b and c.

The protein localises to the cell inner membrane. In terms of biological role, produces ATP from ADP in the presence of a proton gradient across the membrane. The gamma chain is believed to be important in regulating ATPase activity and the flow of protons through the CF(0) complex. This is ATP synthase gamma chain from Thiobacillus denitrificans (strain ATCC 25259 / T1).